Reading from the N-terminus, the 172-residue chain is Co-chaperone protein HscB (172 aa).

The region spanning 2-74 (DYFTLFGLPI…LKRAEYMLSL (73 aa)) is the J domain.

It belongs to the HscB family. As to quaternary structure, interacts with HscA and stimulates its ATPase activity. Interacts with IscU.

Functionally, co-chaperone involved in the maturation of iron-sulfur cluster-containing proteins. Seems to help targeting proteins to be folded toward HscA. The polypeptide is Co-chaperone protein HscB (Pectobacterium atrosepticum (strain SCRI 1043 / ATCC BAA-672) (Erwinia carotovora subsp. atroseptica)).